Here is a 207-residue protein sequence, read N- to C-terminus: Minor capsid protein P11 (207 aa).

The hydrophobic stretch occupies residues 7–23; sequence VKVVAILAVLFLVYKLW. A disordered region spans residues 63–82; that stretch reads ETDAEDDDIYTGETDDMYDG.

In terms of assembly, interacts with the major capsid protein.

The protein localises to the virion. One of the minor capsid proteins that constitute a network internal to the major capsid proteins and outside the lipid membrane. The minor capsid proteins glue and stabilize the capsomers. the p11 zip protein binds together the neighboring symmetrons. The polypeptide is Minor capsid protein P11 (Paramecium bursaria Chlorella virus 1 (PBCV-1)).